Here is a 389-residue protein sequence, read N- to C-terminus: Phospho-N-acetylmuramoyl-pentapeptide-transferase (389 aa).

10 helical membrane-spanning segments follow: residues 25–45 (RAVMASLTALVIGLGFGPFVI), 74–94 (MGGVLVLIGIAVSTLLWADWG), 97–117 (FIWIVLLVTLGYGAIGWVDDY), 134–154 (FFWQTVIGLFAAAYLAFSVSE), 190–210 (ISYPLGVFGFIILTYLVIVGS), 222–242 (GLVIMPVVLVGSALGVFAYVM), 259–279 (AGELLIFCSAMAGAGLAFLWF), 286–306 (VFMGDVGALALGGALGTIAVI), 311–331 (IVLFIMGGIFVAETVSVMLQV), and 366–386 (QVVVRFWVITMMLVLIGLSTL).

The protein belongs to the glycosyltransferase 4 family. MraY subfamily. The cofactor is Mg(2+).

The protein localises to the cell inner membrane. The enzyme catalyses UDP-N-acetyl-alpha-D-muramoyl-L-alanyl-gamma-D-glutamyl-meso-2,6-diaminopimeloyl-D-alanyl-D-alanine + di-trans,octa-cis-undecaprenyl phosphate = di-trans,octa-cis-undecaprenyl diphospho-N-acetyl-alpha-D-muramoyl-L-alanyl-D-glutamyl-meso-2,6-diaminopimeloyl-D-alanyl-D-alanine + UMP. The protein operates within cell wall biogenesis; peptidoglycan biosynthesis. In terms of biological role, catalyzes the initial step of the lipid cycle reactions in the biosynthesis of the cell wall peptidoglycan: transfers peptidoglycan precursor phospho-MurNAc-pentapeptide from UDP-MurNAc-pentapeptide onto the lipid carrier undecaprenyl phosphate, yielding undecaprenyl-pyrophosphoryl-MurNAc-pentapeptide, known as lipid I. The protein is Phospho-N-acetylmuramoyl-pentapeptide-transferase of Ralstonia pickettii (strain 12J).